Consider the following 196-residue polypeptide: O-methyltransferase dpmpI (196 aa).

Residues 127 to 128, D152, and 174 to 175 contribute to the S-adenosyl-L-methionine site; these read GG and SF. Residues 166–196 form a disordered region; it reads NGIEAVPHSFEDPQPIKSKSPRLDNLARERL. Residues 186–196 are compositionally biased toward basic and acidic residues; that stretch reads PRLDNLARERL.

The protein belongs to the class I-like SAM-binding methyltransferase superfamily. Cation-independent O-methyltransferase family.

It functions in the pathway secondary metabolite biosynthesis; terpenoid biosynthesis. Functionally, O-methyltransferase; part of the gene cluster that mediates the biosynthesis of diterpenoid pyrones. The first step of the pathway is the synthesis of the alpha-pyrone moiety by the polyketide synthase dpmpA via condensation of one acetyl-CoA starter unit with 3 malonyl-CoA units and 2 methylations. The alpha-pyrone is then combined with geranylgeranyl pyrophosphate (GGPP) formed by the GGPP synthase dpmpD through the action of the prenyltransferase dpmpC to yield a linear alpha-pyrone diterpenoid. Subsequent steps in the diterpenoid pyrone biosynthetic pathway involve the decalin core formation, which is initiated by the epoxidation of the C10-C11 olefin by the FAD-dependent oxidoreductase dpmpE, and is followed by a cyclization cascade catalyzed by the terpene cyclase dpmpB. The short chain dehydrogenase/reductase dpmpG then oxidizes the 8S hydroxy group to a ketone and the short chain dehydrogenase/reductase dpmpH reduces the ketone to the 8R hydroxy group to yield higginsianin B. Higginsianin B is further methylated by the methyltransferase dpmpI to produce the intermediate named FDDP B. The cytochrome P450 monooxygenase dpmpJ then oxidizes the C-26 methyl to primary alcohol, producing the final diterpenoid pyrone with a C-26 primary alcohol on the gamma-pyrone moiety named FDDP C. The protein is O-methyltransferase dpmpI of Macrophomina phaseolina (strain MS6) (Charcoal rot fungus).